The chain runs to 134 residues: Phospholipase A2 (134 aa).

Residues W8, G10, and G12 each coordinate Ca(2+). Disulfide bonds link C9–C31, C30–C70, C37–C63, C61–C95, and C105–C113. An N-linked (GlcNAc...) asparagine glycan is attached at N13. Residue H34 is part of the active site. D35 provides a ligand contact to Ca(2+). Residue D64 is part of the active site.

The protein belongs to the phospholipase A2 family. Group III subfamily. Ca(2+) serves as cofactor. Expressed by the venom gland.

The protein localises to the secreted. It catalyses the reaction a 1,2-diacyl-sn-glycero-3-phosphocholine + H2O = a 1-acyl-sn-glycero-3-phosphocholine + a fatty acid + H(+). In terms of biological role, PLA2 catalyzes the calcium-dependent hydrolysis of the 2-acyl groups in 3-sn-phosphoglycerides. In Apis dorsata (Giant honeybee), this protein is Phospholipase A2.